Consider the following 326-residue polypeptide: MSNISVIGTGSYVPNNIITNDFLSTIVDTSDEWIRTRTGILERRISKGENTIYMATESAKEAIKNANIEANDLDLIIVATLTPDNFMPSTACSVQKEIGAINALCFDISAACSGFIYGLEIACSMLKNSFRNKALIIGAENLSKIVDWEDRNTCVLFGDGAGAAILSKTKEEGILEFHSGSNGLKGEHLTCGVLKANNTPNKNDRLEKNNFIKMNGKEIFRFAVGAMNETICNIQEKTKWDLNEVKYIISHQANSRIIEYTAKKLNTEKDKFYMNLDKYGNTSAASIPIALDEMNKRGLLNKQDKIILVGFGGGLTFGGVAIVWSI.

Active-site residues include Cys-112 and His-251. Positions 252-256 are ACP-binding; it reads QANSR. The active site involves Asn-281.

This sequence belongs to the thiolase-like superfamily. FabH family. As to quaternary structure, homodimer.

The protein resides in the cytoplasm. It catalyses the reaction malonyl-[ACP] + acetyl-CoA + H(+) = 3-oxobutanoyl-[ACP] + CO2 + CoA. It participates in lipid metabolism; fatty acid biosynthesis. In terms of biological role, catalyzes the condensation reaction of fatty acid synthesis by the addition to an acyl acceptor of two carbons from malonyl-ACP. Catalyzes the first condensation reaction which initiates fatty acid synthesis and may therefore play a role in governing the total rate of fatty acid production. Possesses both acetoacetyl-ACP synthase and acetyl transacylase activities. Its substrate specificity determines the biosynthesis of branched-chain and/or straight-chain of fatty acids. In Clostridium botulinum (strain Langeland / NCTC 10281 / Type F), this protein is Beta-ketoacyl-[acyl-carrier-protein] synthase III.